Here is a 953-residue protein sequence, read N- to C-terminus: Xylosyltransferase 1 (953 aa).

Topologically, residues 1 to 17 are cytoplasmic; it reads MVAAPCARRLARRSHSA. A helical; Signal-anchor for type II membrane protein membrane pass occupies residues 18–38; the sequence is LLAALMVLLLHTLVVWNFSSL. Over 39–953 the chain is Lumenal; sequence DSGAGEQRRA…GAVKPDGRLR (915 aa). Residues 48 to 62 are compositionally biased toward low complexity; it reads AGAAAGAAEQQQPAA. Disordered stretches follow at residues 48 to 67 and 74 to 251; these read AGAA…RRER and LPAA…APKC. A compositionally biased stretch (gly residues) spans 79–97; it reads GGPGGRAGGGGARGGGPGG. Residues 138–154 show a composition bias toward basic and acidic residues; sequence KVRTDSNNENSVPKDFE. Polar residues predominate over residues 156 to 165; the sequence is VDNSNFAPRT. Composition is skewed to basic and acidic residues over residues 170–197 and 205–216; these read HQPE…DKRQ and GPKEVLPPREKA. An N-linked (GlcNAc...) asparagine glycan is attached at N219. 4 disulfide bridges follow: C251–C279, C295–C536, C555–C568, and C557–C566. UDP-alpha-D-xylose contacts are provided by residues V327, D355, and 384 to 386; that span reads TIW. Residue N415 is glycosylated (N-linked (GlcNAc...) asparagine). 488 to 489 contributes to the UDP-alpha-D-xylose binding site; sequence DW. Residues S569 and 592–593 contribute to the UDP-alpha-D-xylose site; that span reads RK. 2 disulfides stabilise this stretch: C669–C921 and C914–C927. N771 is a glycosylation site (N-linked (GlcNAc...) asparagine). Residues 933–953 form a disordered region; that stretch reads SSFSPDPKSELGAVKPDGRLR.

Belongs to the glycosyltransferase 14 family. XylT subfamily. Monomer. Requires a divalent metal cation as cofactor. Contains 7 disulfide bonds. Post-translationally, N-glycosylated. As to expression, detected in brain, spleen, kidney and testis, and at low levels in skeletal muscle.

The protein resides in the golgi apparatus membrane. The enzyme catalyses UDP-alpha-D-xylose + L-seryl-[protein] = 3-O-(beta-D-xylosyl)-L-seryl-[protein] + UDP + H(+). Its pathway is glycan metabolism; chondroitin sulfate biosynthesis. It functions in the pathway glycan metabolism; heparan sulfate biosynthesis. In terms of biological role, catalyzes the first step in the biosynthesis of chondroitin sulfate and dermatan sulfate proteoglycans, such as DCN. Transfers D-xylose from UDP-D-xylose to specific serine residues of the core protein. Required for normal maturation of chondrocytes during bone development, normal onset of ossification and normal embryonic and postnatal skeleton development, especially of the long bones. This chain is Xylosyltransferase 1 (Xylt1), found in Mus musculus (Mouse).